Here is a 249-residue protein sequence, read N- to C-terminus: Probable septum site-determining protein MinC (249 aa).

The disordered stretch occupies residues 117–138 (AVRPPQPPPPPHARAEPAAPVA).

It belongs to the MinC family. In terms of assembly, interacts with MinD and FtsZ.

Its function is as follows. Cell division inhibitor that blocks the formation of polar Z ring septums. Rapidly oscillates between the poles of the cell to destabilize FtsZ filaments that have formed before they mature into polar Z rings. Prevents FtsZ polymerization. The polypeptide is Probable septum site-determining protein MinC (Xanthomonas campestris pv. campestris (strain 8004)).